Reading from the N-terminus, the 1194-residue chain is Chitin synthase C (1194 aa).

Disordered regions lie at residues 1-91 (MSLP…PNYL) and 136-177 (GAHG…RRKA). Positions 12–23 (PRREETSAFREP) are enriched in basic and acidic residues. The segment covering 42–54 (PRHHRHHRSHSSR) has biased composition (basic residues). Composition is skewed to basic and acidic residues over residues 55-69 (HQHD…EGGI) and 76-85 (VKPERGRMDP). The segment covering 150-164 (TRHRSKKRKGSRKIS) has biased composition (basic residues). The helical transmembrane segment at 221–241 (IGLISIILMIAAFVGFLTFGF) threads the bilayer. 2 N-linked (GlcNAc...) asparagine glycosylation sites follow: Asn351 and Asn390. Residues 476-496 (YVSLIFILSIVIVKFAFALLF) form a helical membrane-spanning segment. N-linked (GlcNAc...) asparagine glycans are attached at residues Asn582, Asn608, Asn885, and Asn1014. 3 consecutive transmembrane segments (helical) span residues 1039-1059 (FVIF…SFTI), 1073-1093 (IIPL…VVVT), and 1097-1117 (LVYV…NFVL).

It belongs to the chitin synthase family. Class V subfamily.

Its subcellular location is the cell membrane. The enzyme catalyses [(1-&gt;4)-N-acetyl-beta-D-glucosaminyl](n) + UDP-N-acetyl-alpha-D-glucosamine = [(1-&gt;4)-N-acetyl-beta-D-glucosaminyl](n+1) + UDP + H(+). Its function is as follows. Polymerizes chitin, a structural polymer of the cell wall and septum, by transferring the sugar moiety of UDP-GlcNAc to the non-reducing end of the growing chitin polymer. Responsible for synthesis of 30-40% of the chitin in the cells. ChsA and chsD play redundant functions in conidia formation. The chitin synthesized by the chsD-encoded isozyme contributes to the rigidity of the walls of germinating conidia, of the subapical region of hyphae, and of conidiophore vesicles, but is not necessary for normal morphology of these cells. The polypeptide is Chitin synthase C (Emericella nidulans (strain FGSC A4 / ATCC 38163 / CBS 112.46 / NRRL 194 / M139) (Aspergillus nidulans)).